We begin with the raw amino-acid sequence, 128 residues long: Con-Ins F2c (128 aa).

An N-terminal signal peptide occupies residues 1 to 24; the sequence is MTTSSYFLLVALGLLLYVCRSSFG. Intrachain disulfides connect cysteine 29–cysteine 104, cysteine 41–cysteine 107, cysteine 53–cysteine 120, and cysteine 106–cysteine 111. A propeptide spans 59–89 (c peptide); the sequence is LQGGTGKKRGRASLLRKRRAFLSMLKARAKR. Glutamate 115 carries the post-translational modification 4-carboxyglutamate; partial. Serine 127 carries the post-translational modification Serine amide.

The protein belongs to the insulin family. Heterodimer of A and B chains; disulfide-linked. Expressed by the venom gland.

Its subcellular location is the secreted. Its function is as follows. This venom insulin facilitates prey capture by rapidly inducing hypoglycemic shock. Intraperitoneal injection of this peptide into zebrafish lowers blood glucose with the same potency than human insulin. In vivo, when applied to water, this peptide reduces overall locomotor activity of zebrafish larvae, observed as a significant decrease in the percentage of time spent swimming and movement frequency. The protein is Con-Ins F2c of Conus floridulus (Cone snail).